The sequence spans 177 residues: Large ribosomal subunit protein uL6 (177 aa).

Belongs to the universal ribosomal protein uL6 family. In terms of assembly, part of the 50S ribosomal subunit.

Its function is as follows. This protein binds to the 23S rRNA, and is important in its secondary structure. It is located near the subunit interface in the base of the L7/L12 stalk, and near the tRNA binding site of the peptidyltransferase center. The chain is Large ribosomal subunit protein uL6 from Rhizobium johnstonii (strain DSM 114642 / LMG 32736 / 3841) (Rhizobium leguminosarum bv. viciae).